We begin with the raw amino-acid sequence, 542 residues long: Excitatory amino acid transporter 1 (542 aa).

The Cytoplasmic portion of the chain corresponds to 1–47; that stretch reads MTKSNGEEPKMGGRMERFQQGVRKRTLLAKKKVQNITKEDVKSYLFR. A helical membrane pass occupies residues 48–68; that stretch reads NAFVLLTVTAVIVGTILGFTL. Residues 69 to 86 are Extracellular-facing; it reads RPYRMSYREVKYFSFPGE. The helical transmembrane segment at 87-108 threads the bilayer; it reads LLMRMLQMLVLPLIISSLVTGM. Residues 109–122 lie on the Cytoplasmic side of the membrane; that stretch reads AALDSKASGKMGMR. The chain crosses the membrane as a helical span at residues 123-145; it reads AVVYYMTTTIIAVVIGIIIVIII. Residues 146–236 lie on the Extracellular side of the membrane; that stretch reads HPGKGTKENM…ITEELVPVPG (91 aa). A helical transmembrane segment spans residues 237–260; that stretch reads SVNGVNALGLVVFSMCFGFVIGNM. The Cytoplasmic portion of the chain corresponds to 261–269; it reads KEQGQALRE. A helical membrane pass occupies residues 270–297; sequence FFDSLNEAIMRLVAVIMWYAPVGILFLI. The Extracellular portion of the chain corresponds to 298-318; that stretch reads AGKIVEMEDMGVIGGQLAMYT. The helical transmembrane segment at 319–340 threads the bilayer; sequence VTVIVGLLIHAVIVLPLLYFLV. Topologically, residues 341 to 345 are cytoplasmic; the sequence is TRKNP. The segment at residues 346–376 is an intramembrane region (discontinuously helical); it reads WVFIGGLLQALITALGTSSSSATLPITFKCL. 363-365 contacts L-aspartate; the sequence is SSS. Over 377–385 the chain is Cytoplasmic; that stretch reads EENNGVDKR. A helical transmembrane segment spans residues 386-412; sequence VTRFVLPVGATINMDGTALYEALAAIF. Residues Gly394, Thr396, and Asn398 each coordinate Na(+). Residue Thr402 participates in L-aspartate binding. Topologically, residues 413 to 425 are extracellular; it reads IAQVNNFELNFGQ. Positions 426-459 form an intramembrane region, discontinuously helical; that stretch reads IITISITATAASIGAAGIPQAGLVTMVIVLTSVG. 443 to 447 serves as a coordination point for L-aspartate; the sequence is IPQAG. Residues 460–472 are Extracellular-facing; sequence LPTDDITLIIAVD. A helical transmembrane segment spans residues 473-494; it reads WFLDRLRTTTNVLGDSLGAGIV. L-aspartate is bound by residues Asp476 and Asn483. Na(+)-binding residues include Asn483 and Asp487. Topologically, residues 495–542 are cytoplasmic; that stretch reads EHLSRHELKNRDVEMGNSVIEENEMKKPYQLIAQDNETEKPIDSETKM. Residue Ser512 is modified to Phosphoserine.

Belongs to the dicarboxylate/amino acid:cation symporter (DAACS) (TC 2.A.23) family. SLC1A3 subfamily. As to quaternary structure, homotrimer. Post-translationally, glycosylated. In terms of tissue distribution, detected in brain. Detected at very much lower levels in heart, lung, placenta and skeletal muscle. Highly expressed in cerebellum, but also found in frontal cortex, hippocampus and basal ganglia.

Its subcellular location is the cell membrane. The enzyme catalyses K(+)(in) + L-glutamate(out) + 3 Na(+)(out) + H(+)(out) = K(+)(out) + L-glutamate(in) + 3 Na(+)(in) + H(+)(in). The catalysed reaction is K(+)(in) + L-aspartate(out) + 3 Na(+)(out) + H(+)(out) = K(+)(out) + L-aspartate(in) + 3 Na(+)(in) + H(+)(in). It carries out the reaction D-aspartate(out) + K(+)(in) + 3 Na(+)(out) + H(+)(out) = D-aspartate(in) + K(+)(out) + 3 Na(+)(in) + H(+)(in). In terms of biological role, sodium-dependent, high-affinity amino acid transporter that mediates the uptake of L-glutamate and also L-aspartate and D-aspartate. Functions as a symporter that transports one amino acid molecule together with two or three Na(+) ions and one proton, in parallel with the counter-transport of one K(+) ion. Mediates Cl(-) flux that is not coupled to amino acid transport; this avoids the accumulation of negative charges due to aspartate and Na(+) symport. Plays a redundant role in the rapid removal of released glutamate from the synaptic cleft, which is essential for terminating the postsynaptic action of glutamate. This Homo sapiens (Human) protein is Excitatory amino acid transporter 1.